A 349-amino-acid polypeptide reads, in one-letter code: Quinolinate synthase (349 aa).

Residues His52 and Ser69 each contribute to the iminosuccinate site. A [4Fe-4S] cluster-binding site is contributed by Cys114. Iminosuccinate contacts are provided by residues 140–142 (YFN) and Ser157. Cys201 is a [4Fe-4S] cluster binding site. Iminosuccinate is bound by residues 227-229 (HPE) and Thr255. Cys300 lines the [4Fe-4S] cluster pocket.

It belongs to the quinolinate synthase family. Type 2 subfamily. Requires [4Fe-4S] cluster as cofactor.

The protein resides in the cytoplasm. It carries out the reaction iminosuccinate + dihydroxyacetone phosphate = quinolinate + phosphate + 2 H2O + H(+). It functions in the pathway cofactor biosynthesis; NAD(+) biosynthesis; quinolinate from iminoaspartate: step 1/1. Catalyzes the condensation of iminoaspartate with dihydroxyacetone phosphate to form quinolinate. The protein is Quinolinate synthase of Mycolicibacterium paratuberculosis (strain ATCC BAA-968 / K-10) (Mycobacterium paratuberculosis).